Here is a 334-residue protein sequence, read N- to C-terminus: Syntaxin-18 (334 aa).

Residues methionine 1–asparagine 308 are Cytoplasmic-facing. Disordered stretches follow at residues glycine 29 to serine 50 and leucine 166 to glutamate 225. Composition is skewed to basic and acidic residues over residues glycine 33 to serine 50, leucine 166 to serine 186, and serine 193 to leucine 207. The 63-residue stretch at isoleucine 242–alanine 304 folds into the t-SNARE coiled-coil homology domain. The helical; Anchor for type IV membrane protein transmembrane segment at alanine 309–leucine 329 threads the bilayer. Residues aspartate 330–serine 334 lie on the Vesicular side of the membrane.

Belongs to the syntaxin family. Component of a SNARE complex consisting of STX18, USE1L, BNIP1/SEC20L, and SEC22B. RINT1/TIP20L and ZW10 are associated with the complex through interaction with BNIP1/SEC20L. Interacts directly with USE1L and BNIP1/SEC20L.

Its subcellular location is the endoplasmic reticulum membrane. It localises to the golgi apparatus membrane. Functionally, syntaxin that may be involved in targeting and fusion of Golgi-derived retrograde transport vesicles with the ER. This is Syntaxin-18 (Stx18) from Rattus norvegicus (Rat).